The primary structure comprises 228 residues: Methyltransferase verB (228 aa).

The protein belongs to the methyltransferase superfamily.

The protein operates within secondary metabolite biosynthesis; terpenoid biosynthesis. It participates in mycotoxin biosynthesis. Methyltransferase; part of the gene cluster that mediates the biosynthesis of the neurotoxin verrucosidin, a methylated alpha-pyrone polyketide that inhibits oxidative phosphorylation in mitochondria and thereby causes neurological diseases. The carbon backbone of verrucosidin is synthesized by the HR-PKS verA, and further modified by the other verrucodidin cluster enzymes. This chain is Methyltransferase verB, found in Penicillium polonicum.